Reading from the N-terminus, the 282-residue chain is ADP-ribosyl cyclase/cyclic ADP-ribose hydrolase (282 aa).

The first 24 residues, 1–24, serve as a signal peptide directing secretion; the sequence is MSPVAIVACVCLAVTLTRISPSEA. 5 cysteine pairs are disulfide-bonded: cysteine 39/cysteine 58, cysteine 75/cysteine 155, cysteine 136/cysteine 149, cysteine 230/cysteine 251, and cysteine 263/cysteine 272.

It belongs to the ADP-ribosyl cyclase family. In terms of tissue distribution, ovotestis.

Its subcellular location is the cytoplasmic vesicle. The catalysed reaction is NAD(+) = cyclic ADP-beta-D-ribose + nicotinamide + H(+). It carries out the reaction NAD(+) + H2O = ADP-D-ribose + nicotinamide + H(+). The enzyme catalyses nicotinate + NADP(+) = nicotinate-adenine dinucleotide phosphate + nicotinamide. Activity is presumably regulated by its sequestration in vesicles before egg fertilization. After fertilization and upon NADase release, it could then be regulated via its potential phosphorylation sites. Functionally, synthesizes cyclic ADP-ribose (cADPR), a second messenger for calcium mobilization from endoplasmic reticulum. Might make the Ca(2+) mobilizer nicotinate-adenine dinucleotide phosphate. Does not have cADPR hydrolase activity. This Aplysia kurodai (Kuroda's sea hare) protein is ADP-ribosyl cyclase/cyclic ADP-ribose hydrolase.